We begin with the raw amino-acid sequence, 278 residues long: Urease accessory protein UreD (278 aa).

It belongs to the UreD family. In terms of assembly, ureD, UreF and UreG form a complex that acts as a GTP-hydrolysis-dependent molecular chaperone, activating the urease apoprotein by helping to assemble the nickel containing metallocenter of UreC. The UreE protein probably delivers the nickel.

It localises to the cytoplasm. Its function is as follows. Required for maturation of urease via the functional incorporation of the urease nickel metallocenter. The chain is Urease accessory protein UreD from Blochmanniella pennsylvanica (strain BPEN).